A 152-amino-acid polypeptide reads, in one-letter code: S-ribosylhomocysteine lyase (152 aa).

Fe cation-binding residues include His-53, His-57, and Cys-120.

It belongs to the LuxS family. In terms of assembly, homodimer. Fe cation is required as a cofactor.

It carries out the reaction S-(5-deoxy-D-ribos-5-yl)-L-homocysteine = (S)-4,5-dihydroxypentane-2,3-dione + L-homocysteine. Involved in the synthesis of autoinducer 2 (AI-2) which is secreted by bacteria and is used to communicate both the cell density and the metabolic potential of the environment. The regulation of gene expression in response to changes in cell density is called quorum sensing. Catalyzes the transformation of S-ribosylhomocysteine (RHC) to homocysteine (HC) and 4,5-dihydroxy-2,3-pentadione (DPD). The protein is S-ribosylhomocysteine lyase of Enterococcus faecalis (strain ATCC 700802 / V583).